Consider the following 111-residue polypeptide: Large ribosomal subunit protein uL22 (111 aa).

It belongs to the universal ribosomal protein uL22 family. Part of the 50S ribosomal subunit.

Its function is as follows. This protein binds specifically to 23S rRNA; its binding is stimulated by other ribosomal proteins, e.g. L4, L17, and L20. It is important during the early stages of 50S assembly. It makes multiple contacts with different domains of the 23S rRNA in the assembled 50S subunit and ribosome. Functionally, the globular domain of the protein is located near the polypeptide exit tunnel on the outside of the subunit, while an extended beta-hairpin is found that lines the wall of the exit tunnel in the center of the 70S ribosome. In Thermoanaerobacter pseudethanolicus (strain ATCC 33223 / 39E) (Clostridium thermohydrosulfuricum), this protein is Large ribosomal subunit protein uL22.